Reading from the N-terminus, the 562-residue chain is MFS-type efflux pump elcC (562 aa).

11 consecutive transmembrane segments (helical) span residues 50–70, 80–100, 111–131, 139–159, 184–204, 215–235, 257–277, 288–308, 309–329, 351–371, and 383–403; these read WVFLIALALFEIGSLICGAAP, VVAGIGSGGLFAGAILLVAEF, GMLGAMYSVASVAGPLMGGAF, LCFYINLPLGVVTAVIVFLLV, LYGLVVLVPTIICILLATQWG, IIALFVVGFVLFVAFVVIEIW, IFSFCLFGSFLVVAYFLPLWF, SGIHNLPSILGTTIFSVAAGG, MVFGLGYYTWACILGSVLAAV, VLYGAGCGFGLNQPLIAIQAA, and VVIFMQTFGGTIAIAVAQNVF. Asn-448 carries N-linked (GlcNAc...) asparagine glycosylation. The chain crosses the membrane as a helical span at residues 455 to 475; the sequence is FYVAVATAGLSMAGSILIPWL. The disordered stretch occupies residues 515–562; sequence EIASEDSQSSDIEKVPRNNEVSTYDSQTSEVEKSSVGSTNRKVESIRN. The span at 533-554 shows a compositional bias: polar residues; sequence NEVSTYDSQTSEVEKSSVGSTN.

This sequence belongs to the major facilitator superfamily. TCR/Tet family.

The protein resides in the cell membrane. Its function is as follows. MFS-type efflux pump; part of the gene cluster that mediates the biosynthesis of elsinochrome C, a perelyenequinone phytotoxin structurally similar to cercosporin. In Phaeosphaeria nodorum (strain SN15 / ATCC MYA-4574 / FGSC 10173) (Glume blotch fungus), this protein is MFS-type efflux pump elcC.